The sequence spans 295 residues: MSIASIASTAQGSATILDGKALAKQIEQQLSTRVDAIKAKTGRTPSLATILVGDDPASATYVRMKGNACQRVGMDSIRVEMPSATTTAELMAKIDELNNNPDVHGILLQHPVPAHIDERACFEQIDLAKDVDGVTCLGFGRMAMQQSAYGSCTPQGIMHLLEHHNIELAGLEAVVVGRSAILGKPMAMMLLNANCTVTICHSRTQDLESHIKRADIVVGAVGVPELIKANWIKAGAVVIDAGFHPTDNGGVGDIELQGVENIASAYTPVPGGVGPMTINTLIRQTVDAAEKSAGL.

NADP(+) contacts are provided by residues 177–179 (GRS) and S202.

Belongs to the tetrahydrofolate dehydrogenase/cyclohydrolase family. Homodimer.

It catalyses the reaction (6R)-5,10-methylene-5,6,7,8-tetrahydrofolate + NADP(+) = (6R)-5,10-methenyltetrahydrofolate + NADPH. It carries out the reaction (6R)-5,10-methenyltetrahydrofolate + H2O = (6R)-10-formyltetrahydrofolate + H(+). Its pathway is one-carbon metabolism; tetrahydrofolate interconversion. Its function is as follows. Catalyzes the oxidation of 5,10-methylenetetrahydrofolate to 5,10-methenyltetrahydrofolate and then the hydrolysis of 5,10-methenyltetrahydrofolate to 10-formyltetrahydrofolate. The chain is Bifunctional protein FolD from Psychrobacter arcticus (strain DSM 17307 / VKM B-2377 / 273-4).